The chain runs to 230 residues: Probable fimbrial chaperone SfmC (230 aa).

The first 23 residues, 1–23 (MMTKIKLLMLIIFYLIISASAHA), serve as a signal peptide directing secretion.

The protein belongs to the periplasmic pilus chaperone family.

It localises to the periplasm. Functionally, part of the sfmACDHF fimbrial operon. Could contribute to adhesion to various surfaces in specific environmental niches. Increases adhesion to eukaryotic T24 bladder epithelial cells in the absence of fim genes. In Escherichia coli (strain K12), this protein is Probable fimbrial chaperone SfmC (sfmC).